The primary structure comprises 524 residues: RNA-binding protein 39 (524 aa).

Residues 1 to 146 form a disordered region; that stretch reads MADDIDIEAM…PVREPIDNLT (146 aa). The residue at position 2 (alanine 2) is an N-acetylalanine. Residues 14–32 are compositionally biased toward basic and acidic residues; sequence PYKKDENKLSSANGHEERS. Composition is skewed to basic residues over residues 33–56 and 64–95; these read KKRK…KERK and KKSK…RGRY. At tyrosine 95 the chain carries Phosphotyrosine. A phosphoserine mark is found at serine 97 and serine 100. Residue lysine 111 forms a Glycyl lysine isopeptide (Lys-Gly) (interchain with G-Cter in SUMO2) linkage. Serine 117 carries the post-translational modification Phosphoserine. Lysine 119 is covalently cross-linked (Glycyl lysine isopeptide (Lys-Gly) (interchain with G-Cter in SUMO2)). Positions 119-130 are enriched in basic residues; sequence KLSRRRSRSKSP. A phosphoserine mark is found at serine 121 and serine 136. Positions 131-146 are enriched in basic and acidic residues; sequence FRKDKSPVREPIDNLT. Threonine 146 carries the post-translational modification Phosphothreonine. The region spanning 153 to 230 is the RRM 1 domain; the sequence is RTVFCMQLAA…VPIIVQASQA (78 aa). Lysine 244 participates in a covalent cross-link: Glycyl lysine isopeptide (Lys-Gly) (interchain with G-Cter in SUMO2). Residues 250 to 328 enclose the RRM 2 domain; that stretch reads MRLYVGSLHF…RPMKVGHVTE (79 aa). The segment at 291 to 355 is activating domain; the sequence is KGYGFITFSD…RTGIDLGTTG (65 aa). The tract at residues 291-400 is interaction with JUN; that stretch reads KGYGFITFSD…ADLQTRLSQQ (110 aa). Phosphoserine occurs at positions 334, 337, and 341. The interval 355-400 is interaction with ESR1 and ESR2; sequence GRLQLMARLAEGTGLQIPPAAQQALQMSGSLAFGAVADLQTRLSQQ. An interaction with NCOA6 region spans residues 400–524; sequence QTEASALAAA…ATQLLVPSRR (125 aa). One can recognise an RRM 3 domain in the interval 439–502; that stretch reads EIKDDVIEEC…KMITAAYVPL (64 aa).

It belongs to the splicing factor SR family. Interacts with NCOA6 and JUN. Interacts with ESR1 and ESR2, in the presence of estradiol (E2). Interacts with RSRC1 (via Arg/Ser-rich domain). Interacts with SF3B1. Interacts with ZNF106 (via N-terminus).

Its subcellular location is the nucleus speckle. RNA-binding protein that acts as a pre-mRNA splicing factor. Acts by promoting exon inclusion via regulation of exon cassette splicing. Also acts as a transcriptional coactivator for steroid nuclear receptors ESR1/ER-alpha and ESR2/ER-beta, and JUN/AP-1, independently of the pre-mRNA splicing factor activity. The protein is RNA-binding protein 39 (RBM39) of Pongo abelii (Sumatran orangutan).